Consider the following 307-residue polypeptide: MSPTPIKHYLQFSDLSADEYEYLLDRARILKAKFKNYETWHPLHDRTLAMIFEKNSTRTRLSFEAGIHQLGGHAVFLNTRDSQLGRGEPIEDAAQVISRMVDIIMIRTFGQEIIDRFAKHSRVPVINGLTNEYHPCQVLADVFTYIEQRGTIAGKTVAWIGDANNMAYTWIQAAERLDFTFHFSAPPGYQLDPAMVPDWAASRVKVFDNPLDACQGAHLVTTDVWTSMGFEAENDARKRAFKDWMVTTAMMDRAADDALFMHCLPAHRGEEVEAAVIDGPRSVVWEEAENRLHVQKALMEYLLCGRY.

Carbamoyl phosphate contacts are provided by residues 56–59 (STRT), Gln-83, Arg-107, and 134–137 (HPCQ). L-ornithine is bound by residues Asn-165, Asp-223, and 227-228 (SM). Carbamoyl phosphate-binding positions include 263–264 (CL) and Arg-291.

This sequence belongs to the aspartate/ornithine carbamoyltransferase superfamily. OTCase family.

The protein localises to the cytoplasm. It catalyses the reaction carbamoyl phosphate + L-ornithine = L-citrulline + phosphate + H(+). It participates in amino-acid biosynthesis; L-arginine biosynthesis; L-arginine from L-ornithine and carbamoyl phosphate: step 1/3. In terms of biological role, reversibly catalyzes the transfer of the carbamoyl group from carbamoyl phosphate (CP) to the N(epsilon) atom of ornithine (ORN) to produce L-citrulline. The polypeptide is Ornithine carbamoyltransferase (Cupriavidus metallidurans (strain ATCC 43123 / DSM 2839 / NBRC 102507 / CH34) (Ralstonia metallidurans)).